We begin with the raw amino-acid sequence, 143 residues long: MPRSPSKSSPRKGSPRKGSPRKGSPKRGGKGAKRAGKGGRRRNVVKRRRRRRESYGSYIYRVLKQVHPDTGISSRGMSVMNSFVNDVFERIAGEASRLCQANRRRTISSREIQTAVRLLLPGELAKHAVSEGTKAVTKYTTSR.

Residues 1-52 are disordered; the sequence is MPRSPSKSSPRKGSPRKGSPRKGSPKRGGKGAKRAGKGGRRRNVVKRRRRRR. Short sequence motifs (SPKK motif) lie at residues 4–7, 9–12, 14–17, 19–22, and 24–27; these read SPSK, SPRK, and SPKR. Over residues 9–52 the composition is skewed to basic residues; that stretch reads SPRKGSPRKGSPRKGSPKRGGKGAKRAGKGGRRRNVVKRRRRRR. 3 positions are modified to phosphoserine: S14, S19, and S24. A glycan (O-linked (GlcNAc) serine) is linked at S130. Residue K138 forms a Glycyl lysine isopeptide (Lys-Gly) (interchain with G-Cter in ubiquitin) linkage.

This sequence belongs to the histone H2B family. In terms of assembly, the nucleosome is a histone octamer containing two molecules each of H2A, H2B, H3 and H4 assembled in one H3-H4 heterotetramer and two H2A-H2B heterodimers. The octamer wraps approximately 147 bp of DNA. Monoubiquitination of Lys-138 gives a specific tag for epigenetic transcriptional activation and is also prerequisite for histone H3 'Lys-4' and 'Lys-79' methylation. In terms of processing, phosphorylated on SPKK motifs 3, 4 and 5; which may regulate DNA binding. Dephosphorylated during maturation of spermatids to mature sperm and rephosphorylated at fertilization. Post-translationally, glcNAcylation at Ser-130 promotes monoubiquitination of Lys-138. It fluctuates in response to extracellular glucose, and associates with transcribed genes. In terms of tissue distribution, testis-specific.

Its subcellular location is the nucleus. It localises to the chromosome. Functionally, core component of nucleosome. Nucleosomes wrap and compact DNA into chromatin, limiting DNA accessibility to the cellular machineries which require DNA as a template. Histones thereby play a central role in transcription regulation, DNA repair, DNA replication and chromosomal stability. DNA accessibility is regulated via a complex set of post-translational modifications of histones, also called histone code, and nucleosome remodeling. The polypeptide is Histone H2B.2, sperm (Lytechinus pictus (Painted sea urchin)).